The sequence spans 646 residues: Glutamine--tRNA ligase protein virJ (646 aa).

The disordered stretch occupies residues N25–E65. Residues A38–A61 are compositionally biased toward low complexity. A 'HIGH' region motif is present at residues P98–H108. ATP-binding positions include E99–N101 and H105–A111. 2 residues coordinate L-glutamine: D147 and Y296. Residues T315, R344–L345, and M352–K354 contribute to the ATP site. The 'KMSKS' region signature appears at I351–R355.

This sequence belongs to the class-I aminoacyl-tRNA synthetase family.

The enzyme catalyses tRNA(Gln) + L-glutamine + ATP = L-glutaminyl-tRNA(Gln) + AMP + diphosphate. Its function is as follows. Glutamine--tRNA ligase; part of the gene cluster that mediates the biosynthesis of virensols and trichoxide, fungal natural products that contain or are derived from a salicylaldehyde core. VirJ does not seem to play any role in virensols and trichoxide biosynthesis. The chain is Glutamine--tRNA ligase protein virJ from Hypocrea virens (strain Gv29-8 / FGSC 10586) (Gliocladium virens).